The following is a 119-amino-acid chain: Phytosulfokines 2 (119 aa).

The signal sequence occupies residues 1 to 34 (MSTTRGVSSSSAAAALALLLLFALCFFSFHSAAA). Residues 35–109 (ARAVPRDEHQ…RRLLSDAHLD (75 aa)) constitute a propeptide that is removed on maturation. Y110 and Y112 each carry sulfotyrosine. Positions 115 to 119 (HKNKP) are excised as a propeptide.

Belongs to the phytosulfokine family. In terms of processing, sulfation is important for activity and for the binding to a putative membrane receptor. Post-translationally, PSK-alpha is produced by endopeptidase digestion. PSK-beta is produced from PSK-alpha by exopeptidase digestion.

Its subcellular location is the secreted. Functionally, promotes plant cell differentiation, organogenesis and somatic embryogenesis as well as cell proliferation. The sequence is that of Phytosulfokines 2 (PSK2) from Oryza sativa subsp. indica (Rice).